A 188-amino-acid polypeptide reads, in one-letter code: dCTP deaminase (188 aa).

DCTP contacts are provided by residues 111 to 116 (KSTYAR), 135 to 137 (TLE), Gln156, Tyr170, and Gln180. The active-site Proton donor/acceptor is Glu137.

Belongs to the dCTP deaminase family. Homotrimer.

It catalyses the reaction dCTP + H2O + H(+) = dUTP + NH4(+). Its pathway is pyrimidine metabolism; dUMP biosynthesis; dUMP from dCTP (dUTP route): step 1/2. Catalyzes the deamination of dCTP to dUTP. The chain is dCTP deaminase from Pseudomonas putida (strain GB-1).